Here is a 493-residue protein sequence, read N- to C-terminus: UDP-N-acetylmuramoyl-L-alanyl-D-glutamate--2,6-diaminopimelate ligase (493 aa).

Ser-30 provides a ligand contact to UDP-N-acetyl-alpha-D-muramoyl-L-alanyl-D-glutamate. 114 to 120 (GTNGKTS) contacts ATP. Residues 156–157 (TT), Ser-183, Gln-189, and Arg-191 each bind UDP-N-acetyl-alpha-D-muramoyl-L-alanyl-D-glutamate. Lys-223 is subject to N6-carboxylysine. Residues Arg-386, 410–413 (DNPR), Gly-460, and Glu-464 contribute to the meso-2,6-diaminopimelate site. The short motif at 410 to 413 (DNPR) is the Meso-diaminopimelate recognition motif element.

The protein belongs to the MurCDEF family. MurE subfamily. The cofactor is Mg(2+). In terms of processing, carboxylation is probably crucial for Mg(2+) binding and, consequently, for the gamma-phosphate positioning of ATP.

The protein resides in the cytoplasm. The enzyme catalyses UDP-N-acetyl-alpha-D-muramoyl-L-alanyl-D-glutamate + meso-2,6-diaminopimelate + ATP = UDP-N-acetyl-alpha-D-muramoyl-L-alanyl-gamma-D-glutamyl-meso-2,6-diaminopimelate + ADP + phosphate + H(+). It functions in the pathway cell wall biogenesis; peptidoglycan biosynthesis. Catalyzes the addition of meso-diaminopimelic acid to the nucleotide precursor UDP-N-acetylmuramoyl-L-alanyl-D-glutamate (UMAG) in the biosynthesis of bacterial cell-wall peptidoglycan. The polypeptide is UDP-N-acetylmuramoyl-L-alanyl-D-glutamate--2,6-diaminopimelate ligase (Chromobacterium violaceum (strain ATCC 12472 / DSM 30191 / JCM 1249 / CCUG 213 / NBRC 12614 / NCIMB 9131 / NCTC 9757 / MK)).